Reading from the N-terminus, the 98-residue chain is Integration host factor subunit alpha (98 aa).

Residues phenylalanine 49 to aspartate 70 are disordered.

Belongs to the bacterial histone-like protein family. In terms of assembly, heterodimer of an alpha and a beta chain.

Functionally, this protein is one of the two subunits of integration host factor, a specific DNA-binding protein that functions in genetic recombination as well as in transcriptional and translational control. In Serratia proteamaculans (strain 568), this protein is Integration host factor subunit alpha.